A 206-amino-acid chain; its full sequence is Small ribosomal subunit protein uS4 (206 aa).

Residues 96–157 (SRLDNVVYRM…KAQKQLRVQA (62 aa)) enclose the S4 RNA-binding domain.

The protein belongs to the universal ribosomal protein uS4 family. In terms of assembly, part of the 30S ribosomal subunit. Contacts protein S5. The interaction surface between S4 and S5 is involved in control of translational fidelity.

Functionally, one of the primary rRNA binding proteins, it binds directly to 16S rRNA where it nucleates assembly of the body of the 30S subunit. Its function is as follows. With S5 and S12 plays an important role in translational accuracy. The protein is Small ribosomal subunit protein uS4 of Alkalilimnicola ehrlichii (strain ATCC BAA-1101 / DSM 17681 / MLHE-1).